A 393-amino-acid polypeptide reads, in one-letter code: Acetyl-CoA acetyltransferase (393 aa).

C88 functions as the Acyl-thioester intermediate in the catalytic mechanism. Catalysis depends on proton acceptor residues H349 and C379.

Belongs to the thiolase-like superfamily. Thiolase family. As to quaternary structure, homotetramer.

The protein resides in the cytoplasm. It carries out the reaction 2 acetyl-CoA = acetoacetyl-CoA + CoA. It functions in the pathway biopolymer metabolism; poly-(R)-3-hydroxybutanoate biosynthesis. Its activity is regulated as follows. The condensation reaction is inhibited by free CoA. The cleavage reaction is characterized by substrate inhibition by acetoacetyl-CoA, which is partially relieved by free CoA. Catalyzes the condensation of two acetyl-coA units to form acetoacetyl-CoA. Is involved in the biosynthesis of polyhydroxybutyrate (PHB), which is accumulated as an intracellular energy reserve material when cells grow under conditions of nutrient limitation. Also catalyzes the reverse reaction, i.e. the cleavage of acetoacetyl-CoA, and is therefore also involved in the reutilization of PHB. This Cupriavidus necator (strain ATCC 17699 / DSM 428 / KCTC 22496 / NCIMB 10442 / H16 / Stanier 337) (Ralstonia eutropha) protein is Acetyl-CoA acetyltransferase.